Here is a 208-residue protein sequence, read N- to C-terminus: UPF0637 protein BCQ_3749 (208 aa).

This sequence belongs to the UPF0637 family.

The sequence is that of UPF0637 protein BCQ_3749 from Bacillus cereus (strain Q1).